A 171-amino-acid polypeptide reads, in one-letter code: Cytochrome c oxidase subunit 4 isoform 2, mitochondrial (171 aa).

Residues 1 to 28 (MLPRAAWSLVLRKGGGGRRGMHSSEGTT) constitute a mitochondrion transit peptide. Residues 13–32 (KGGGGRRGMHSSEGTTRGGG) form a disordered region. The Mitochondrial matrix portion of the chain corresponds to 29–100 (RGGGKMSPYT…TFAEMNRRSN (72 aa)). Residues 101 to 126 (EWKTVMGCVFFFIGFAALVIWWQRVY) form a helical membrane-spanning segment. The Mitochondrial intermembrane portion of the chain corresponds to 127-171 (VFPPKPITLTDERKAQQLQRMLDMKVNPVQGLASRWDYEKKQWKK).

This sequence belongs to the cytochrome c oxidase IV family. As to quaternary structure, component of the cytochrome c oxidase (complex IV, CIV), a multisubunit enzyme composed of 14 subunits. The complex is composed of a catalytic core of 3 subunits MT-CO1, MT-CO2 and MT-CO3, encoded in the mitochondrial DNA, and 11 supernumerary subunits COX4I1 (or COX4I2), COX5A, COX5B, COX6A1 (or COX6A2), COX6B1 (or COX6B2), COX6C, COX7A2 (or COX7A1), COX7B, COX7C, COX8A and NDUFA4, which are encoded in the nuclear genome. The complex exists as a monomer or a dimer and forms supercomplexes (SCs) in the inner mitochondrial membrane with NADH-ubiquinone oxidoreductase (complex I, CI) and ubiquinol-cytochrome c oxidoreductase (cytochrome b-c1 complex, complex III, CIII), resulting in different assemblies (supercomplex SCI(1)III(2)IV(1) and megacomplex MCI(2)III(2)IV(2)). Highly expressed in lung.

Its subcellular location is the mitochondrion inner membrane. It participates in energy metabolism; oxidative phosphorylation. Functionally, component of the cytochrome c oxidase, the last enzyme in the mitochondrial electron transport chain which drives oxidative phosphorylation. The respiratory chain contains 3 multisubunit complexes succinate dehydrogenase (complex II, CII), ubiquinol-cytochrome c oxidoreductase (cytochrome b-c1 complex, complex III, CIII) and cytochrome c oxidase (complex IV, CIV), that cooperate to transfer electrons derived from NADH and succinate to molecular oxygen, creating an electrochemical gradient over the inner membrane that drives transmembrane transport and the ATP synthase. Cytochrome c oxidase is the component of the respiratory chain that catalyzes the reduction of oxygen to water. Electrons originating from reduced cytochrome c in the intermembrane space (IMS) are transferred via the dinuclear copper A center (CU(A)) of subunit 2 and heme A of subunit 1 to the active site in subunit 1, a binuclear center (BNC) formed by heme A3 and copper B (CU(B)). The BNC reduces molecular oxygen to 2 water molecules using 4 electrons from cytochrome c in the IMS and 4 protons from the mitochondrial matrix. The sequence is that of Cytochrome c oxidase subunit 4 isoform 2, mitochondrial from Homo sapiens (Human).